Consider the following 315-residue polypeptide: Acetaldehyde dehydrogenase 2 (315 aa).

15–18 serves as a coordination point for NAD(+); the sequence is SGNI. Cys135 acts as the Acyl-thioester intermediate in catalysis. Residues 166–174 and Asn293 contribute to the NAD(+) site; that span reads SAGPGTRAN.

The protein belongs to the acetaldehyde dehydrogenase family.

It catalyses the reaction acetaldehyde + NAD(+) + CoA = acetyl-CoA + NADH + H(+). In Paraburkholderia phymatum (strain DSM 17167 / CIP 108236 / LMG 21445 / STM815) (Burkholderia phymatum), this protein is Acetaldehyde dehydrogenase 2.